Reading from the N-terminus, the 1241-residue chain is Interphotoreceptor matrix proteoglycan 2 (1241 aa).

The signal sequence occupies residues 1–22; sequence MIMFPLFGKISLGILIFVLIEG. The Extracellular segment spans residues 23 to 1099; that stretch reads DFPSLTAQTY…KHCEEFVSEP (1077 aa). A glycan (N-linked (GlcNAc...) asparagine) is linked at asparagine 154. The tract at residues 180–223 is disordered; the sequence is ELSSPVPVGDTSTLGDTTLSVPHPEVDAYEGASESSLERPEESI. Positions 189 to 199 are enriched in polar residues; it reads DTSTLGDTTLS. Threonine 190 and threonine 192 each carry an O-linked (GalNAc...) threonine glycan. The SEA 1 domain maps to 239–353; that stretch reads GEQIAEFSIH…KPTVVYTISN (115 aa). The tract at residues 259-267 is hyaluronan-binding motif involved in chondroitin sulfate A-binding; it reads QDSSSFHHQ. N-linked (GlcNAc...) asparagine glycosylation is found at asparagine 301, asparagine 320, and asparagine 370. O-linked (GalNAc...) threonine glycans are attached at residues threonine 544 and threonine 556. Basic and acidic residues predominate over residues 660-678; sequence QISKHSKYEHDDRSTHFPE. The disordered stretch occupies residues 660–684; that stretch reads QISKHSKYEHDDRSTHFPEEEPLSG. Residues 897-1010 enclose the SEA 2 domain; it reads GALVVFFSLR…YSLDVESGDE (114 aa). 2 N-linked (GlcNAc...) asparagine glycosylation sites follow: asparagine 942 and asparagine 956. EGF-like domains follow at residues 1010 to 1051 and 1052 to 1093; these read EANP…RPCQ and SLCD…KHCE. 6 disulfides stabilise this stretch: cysteine 1014-cysteine 1025, cysteine 1019-cysteine 1036, cysteine 1038-cysteine 1050, cysteine 1054-cysteine 1067, cysteine 1061-cysteine 1077, and cysteine 1079-cysteine 1092. The segment at 1080–1088 is hyaluronan-binding motif involved in chondroitin sulfate C-binding; sequence RVGENWWYR. The chain crosses the membrane as a helical span at residues 1100–1120; that stretch reads VIIGITIASVVGLLVIFSAII. Residues 1121–1241 are Cytoplasmic-facing; it reads YFFIRTLQAH…FVREQQVEEV (121 aa). A hyaluronan-binding motif involved in chondroitin sulfate A- and C-binding region spans residues 1125–1133; the sequence is RTLQAHHDR. Residues 1136-1145 form a hyaluronan-binding motif involved in chondroitin sulfate C-binding region; the sequence is RESPFSGSSR. Residues 1210–1218 form a hyaluronan-binding motif involved in chondroitin sulfate A- and C-binding motif region; that stretch reads REEIQERMR.

Post-translationally, highly glycosylated (N- and O-linked carbohydrates). In terms of tissue distribution, expressed in the retina (at protein level). Expressed by photoreceptors of the interphotoreceptor matrix (IPM) surrounding both rods and cones (at protein level). IPM occupies the subretinal space between the apices of the retinal pigment epithelium and the neural retina. Expressed in the pineal gland (at protein level).

The protein resides in the photoreceptor outer segment membrane. The protein localises to the photoreceptor inner segment membrane. It localises to the secreted. Its subcellular location is the extracellular space. It is found in the extracellular matrix. The protein resides in the interphotoreceptor matrix. Functionally, chondroitin sulfate- and hyaluronan-binding proteoglycan involved in the organization of interphotoreceptor matrix; may participate in the maturation and maintenance of the light-sensitive photoreceptor outer segment. Binds heparin. This Homo sapiens (Human) protein is Interphotoreceptor matrix proteoglycan 2 (IMPG2).